The following is a 365-amino-acid chain: Validamycin A dioxygenase (365 aa).

Residues 174 to 284 (HATWTQSVNW…LVSLVYFFDA (111 aa)) enclose the Fe2OG dioxygenase domain. Fe cation-binding residues include His203, Asp205, and His261. Positions 331 to 365 (GELSLSRPGSADSPGSSPADDHPSRPGRHPAQGPQ) are disordered. The span at 336–348 (SRPGSADSPGSSP) shows a compositional bias: low complexity.

It belongs to the iron/ascorbate-dependent oxidoreductase family. It depends on Fe(2+) as a cofactor.

It carries out the reaction validamycin A + 2-oxoglutarate + O2 = validamycin B + succinate + CO2 + H(+). It catalyses the reaction validoxylamine A + 2-oxoglutarate + O2 = validoxylamine B + succinate + CO2 + H(+). Its pathway is antibiotic biosynthesis. Involved in the biosynthesis of validamycin B, a component of the antifungal and antibiotic validamycin complex used as a crop protectant. Catalyzes the regioselective hydroxylation of validamycin A (4-O-beta-D-glucopyranosyl-validoxylamine A) at the C-6 position to yield validamycin B. To a lesser extent, also able to convert validoxylamine A to its hydroxylated derivative. This Streptomyces hygroscopicus subsp. limoneus protein is Validamycin A dioxygenase.